We begin with the raw amino-acid sequence, 609 residues long: Replication protein A 70 kDa DNA-binding subunit (609 aa).

The tract at residues 113-163 is disordered; the sequence is GNPQPYNDGQPQPAAPAPASAPAPAPSKLQNNSAPPPSMNRGTSKLFGGGS. A compositionally biased stretch (pro residues) spans 125 to 137; sequence PAAPAPASAPAPA. The OB DNA-binding region spans 188–272; the sequence is WTVRARVTNK…VKNDYEMTFN (85 aa). Residues 472 to 494 form a C4-type zinc finger; the sequence is CPSQDCNKKVIDQQNGLFRCEKC.

This sequence belongs to the replication factor A protein 1 family. In terms of assembly, component of the heterotrimeric canonical replication protein A complex (RPA). Interacts with rpain-a.

The protein resides in the nucleus. The protein localises to the PML body. Its function is as follows. As part of the heterotrimeric replication protein A complex (RPA/RP-A), binds and stabilizes single-stranded DNA intermediates, that form during DNA replication or upon DNA stress. It prevents their reannealing and in parallel, recruits and activates different proteins and complexes involved in DNA metabolism. Thereby, it plays an essential role both in DNA replication and the cellular response to DNA damage. The chain is Replication protein A 70 kDa DNA-binding subunit (rpa1) from Xenopus laevis (African clawed frog).